The chain runs to 69 residues: Conotoxin Lt5.10 (69 aa).

A signal peptide spans 1 to 19; sequence MLCLPVFIILLLLASPAAP. The propeptide occupies 20–54; the sequence is KSLETRIQNDLIRAGLTDADLKTEKGFLSGLLNVA.

The protein belongs to the conotoxin T superfamily. In terms of processing, contains 2 disulfide bonds that can be either 'C1-C3, C2-C4' or 'C1-C4, C2-C3', since these disulfide connectivities have been observed for conotoxins with cysteine framework V (for examples, see AC P0DQQ7 and AC P81755). In terms of tissue distribution, expressed by the venom duct.

It localises to the secreted. The polypeptide is Conotoxin Lt5.10 (Conus litteratus (Lettered cone)).